Reading from the N-terminus, the 207-residue chain is Large ribosomal subunit protein uL4 (207 aa).

A disordered region spans residues 48 to 70 (KAQKTRSEVSGGGAKPWRQKGTG).

This sequence belongs to the universal ribosomal protein uL4 family. Part of the 50S ribosomal subunit.

Its function is as follows. One of the primary rRNA binding proteins, this protein initially binds near the 5'-end of the 23S rRNA. It is important during the early stages of 50S assembly. It makes multiple contacts with different domains of the 23S rRNA in the assembled 50S subunit and ribosome. In terms of biological role, forms part of the polypeptide exit tunnel. This is Large ribosomal subunit protein uL4 from Francisella tularensis subsp. mediasiatica (strain FSC147).